The sequence spans 147 residues: Hemoglobin subunit beta (147 aa).

Residue V2 is modified to N-acetylvaline. The region spanning 3–147 is the Globin domain; sequence HLTGEEKAAV…VANALAHKYH (145 aa). T13 is modified (phosphothreonine). S45 is subject to Phosphoserine. K60 is subject to N6-acetyllysine. H64 provides a ligand contact to heme b. K83 is subject to N6-acetyllysine. Position 93 (H93) interacts with heme b. C94 bears the S-nitrosocysteine mark. Position 145 is an N6-acetyllysine (K145).

It belongs to the globin family. As to quaternary structure, heterotetramer of two alpha chains and two beta chains. In terms of tissue distribution, red blood cells.

Its function is as follows. Involved in oxygen transport from the lung to the various peripheral tissues. This is Hemoglobin subunit beta (HBB) from Aotus azarae (Azara's night monkey).